Here is a 337-residue protein sequence, read N- to C-terminus: G-protein coupled receptor 65 (337 aa).

At Met1–Cys5 the chain is on the extracellular side. N-linked (GlcNAc...) asparagine glycosylation is present at Asn2. Intrachain disulfides connect Cys5/Cys160 and Cys87/Cys170. The helical transmembrane segment at Ile6–Gln42 threads the bilayer. At Ala43–Glu46 the chain is on the cytoplasmic side. The helical transmembrane segment at Ser47–Lys77 threads the bilayer. At Asp78–Phe82 the chain is on the extracellular side. Asn79 carries an N-linked (GlcNAc...) asparagine glycan. The helical transmembrane segment at Ser83–Tyr118 threads the bilayer. Residues Pro119 to Arg126 lie on the Cytoplasmic side of the membrane. A helical transmembrane segment spans residues Thr127–Asp153. Residues Glu154–Tyr174 are Extracellular-facing. The interval Glu154 to Tyr174 is extracellular loop 2 (ECL2). Asn166 carries an N-linked (GlcNAc...) asparagine glycan. The helical transmembrane segment at Pro175 to His212 threads the bilayer. Over Asn213–Thr216 the chain is Cytoplasmic. Residues Glu217–Leu252 traverse the membrane as a helical segment. The Extracellular segment spans residues Glu253 to Ser264. Residues Gly265–Val293 form a helical membrane-spanning segment. Over Thr294–Glu337 the chain is Cytoplasmic.

This sequence belongs to the G-protein coupled receptor 1 family. In terms of tissue distribution, predominantly expressed in thymus, spleen, lymph nodes, small intestine, lung, placenta and peripheral blood leukocytes.

The protein localises to the cell membrane. It is found in the early endosome membrane. It localises to the late endosome membrane. With respect to regulation, activated by a network of residues that connects an extracellular-facing cavity to Glu-142, a conserved charged residue buried in the transmembrane core of the receptor. Protonation likely drives conformational changes in extracellular loop 2 (ECL2), which stabilizes movement of transmembrane 3 (TM3) and a series of rearrangements that connect the extracellular-facing cavity to Glu-142, a residue only conserved in proton-sensing G-protein coupled receptors. Activated by BTB09089, a positive allosteric modulator. In terms of biological role, proton-sensing G-protein coupled receptor activated by extracellular pH, which is required to monitor pH changes and generate adaptive reactions. Activated by an optimal pH of 7.4. Ligand binding causes a conformation change that triggers signaling via guanine nucleotide-binding proteins (G proteins) and modulates the activity of downstream effectors, such as adenylate cyclase. GPR65 is mainly coupled to G(s) G proteins and mediates activation of adenylate cyclase activity. May also act as a receptor for the glycosphingolipid psychosine (PSY) and several related glycosphingolipids. Plays a role in immune response by maintaining lysosome function and regulating T-cell metabolism. Acts as a regulator of inflammation by mediating pH-sensing of extracellular acidification which takes place in inflamed tissues: activation regulates endo-lysosomal function of immune cells and T-cell metabolism. Constitutively active in endosomes and stimulates adenylate cyclase production from endosomes independently from extracellular pH changes. The polypeptide is G-protein coupled receptor 65 (Homo sapiens (Human)).